A 427-amino-acid chain; its full sequence is Putative acyl-CoA thioester hydrolase YbhC (427 aa).

An N-terminal signal peptide occupies residues 1–21; that stretch reads MNTFSVSRLALALAFGVTLTA. C22 carries the N-palmitoyl cysteine lipid modification. C22 carries S-diacylglycerol cysteine lipidation. A disordered region spans residues 23–42; sequence SSTPPDQRPSDQTAPGTSSR. C185 and C197 form a disulfide bridge. Catalysis depends on D285, which acts as the Nucleophile. Position 345 (R345) interacts with substrate.

Belongs to the pectinesterase family.

The protein resides in the cell outer membrane. Functionally, putative thioesterase. Does not bind pectin, and has no pectinesterase activity. The sequence is that of Putative acyl-CoA thioester hydrolase YbhC (ybhC) from Escherichia coli (strain K12).